Consider the following 321-residue polypeptide: GDP-L-fucose synthase (321 aa).

An NADP(+)-binding site is contributed by 14–20 (GGSGLVG). Tyrosine 143 (proton donor/acceptor) is an active-site residue. Residues lysine 147, 170–173 (PTNV), and histidine 186 contribute to the NADP(+) site. 4 residues coordinate substrate: lysine 194, tryptophan 208, arginine 215, and aspartate 277.

Belongs to the NAD(P)-dependent epimerase/dehydratase family. Fucose synthase subfamily. In terms of assembly, homodimer.

The catalysed reaction is GDP-beta-L-fucose + NADP(+) = GDP-4-dehydro-alpha-D-rhamnose + NADPH + H(+). It participates in nucleotide-sugar biosynthesis; GDP-L-fucose biosynthesis via de novo pathway; GDP-L-fucose from GDP-alpha-D-mannose: step 2/2. Functionally, catalyzes the two-step NADP-dependent conversion of GDP-4-dehydro-6-deoxy-D-mannose to GDP-fucose, involving an epimerase and a reductase reaction. The sequence is that of GDP-L-fucose synthase (GFUS) from Pongo abelii (Sumatran orangutan).